The sequence spans 200 residues: Probable fatty acid desaturase MIMI_L630 (200 aa).

A run of 2 helical transmembrane segments spans residues 9-29 (FIQI…YHWI) and 79-99 (IGPL…FIMI).

This sequence belongs to the fatty acid desaturase CarF family.

The protein localises to the membrane. The protein is Probable fatty acid desaturase MIMI_L630 of Acanthamoeba polyphaga mimivirus (APMV).